Reading from the N-terminus, the 199-residue chain is Gene 66 protein (199 aa).

This chain is Gene 66 protein (66), found in Mycobacterium (Mycobacteriophage D29).